Reading from the N-terminus, the 942-residue chain is Protein inturned (942 aa).

The interval 1–52 is disordered; that stretch reads MASVASCDSRPSSDELPGDPSSQEEDEDYDFEDRVSDSGSYSSASSDYDDLE. A compositionally biased stretch (acidic residues) spans 22–31; it reads SQEEDEDYDF. Residues 37-46 are compositionally biased toward low complexity; the sequence is DSGSYSSASS. The 79-residue stretch at 185–263 folds into the PDZ domain; the sequence is LVGIIHQTKW…PMQVKLTFEN (79 aa). Phosphoserine occurs at positions 670 and 674. A disordered region spans residues 704 to 754; that stretch reads TRKPSPSCSSGGSDNGCEGGEDDGFSPHTTPDAVRKQRESQGSDGLEESGT.

This sequence belongs to the inturned family. Component of the CPLANE (ciliogenesis and planar polarity effectors) complex, composed of INTU, FUZ and WDPCP. Interacts with CPLANE1. Interacts with NPHP4 and DAAM1; INTU is mediating the interaction between NPHP4 and DAAM1.

It is found in the cytoplasm. Its subcellular location is the cell surface. The protein localises to the cytoskeleton. The protein resides in the cilium basal body. It localises to the microtubule organizing center. It is found in the centrosome. Its subcellular location is the centriole. Its function is as follows. Plays a key role in ciliogenesis and embryonic development. Regulator of cilia formation by controlling the organization of the apical actin cytoskeleton and the positioning of the basal bodies at the apical cell surface, which in turn is essential for the normal orientation of elongating ciliary microtubules. Plays a key role in definition of cell polarity via its role in ciliogenesis but not via conversion extension. Has an indirect effect on hedgehog signaling. Proposed to function as core component of the CPLANE (ciliogenesis and planar polarity effectors) complex involved in the recruitment of peripheral IFT-A proteins to basal bodies. Required for recruitment of CPLANE2 to the mother centriole. Binds phosphatidylinositol 3-phosphate with highest affinity, followed by phosphatidylinositol 4-phosphate and phosphatidylinositol 5-phosphate. The sequence is that of Protein inturned (INTU) from Homo sapiens (Human).